A 137-amino-acid polypeptide reads, in one-letter code: Bombinin-like peptides 2 (137 aa).

Residues 1-18 form the signal peptide; it reads MNFKYIVAVSILIASAYA. Asn70 is subject to Asparagine amide. The disordered stretch occupies residues 92–112; it reads DSLEHPEEASEKETRGFNQEE. Ile136 carries the post-translational modification Isoleucine amide.

This sequence belongs to the bombinin family. As to expression, expressed by the skin glands.

It localises to the secreted. Its function is as follows. Bombinin-like peptide 2 has antimicrobial activity, but no hemolytic activity. Preliminary evidence indicates that this peptide does not lyse and thus kill the bacteria by its antimicrobial activity. In terms of biological role, bombinin H2 has antibacterial and hemolytic activity. The chain is Bombinin-like peptides 2 from Bombina variegata (Yellow-bellied toad).